We begin with the raw amino-acid sequence, 197 residues long: Phosphoheptose isomerase (197 aa).

The SIS domain occupies 34–192 (MVNALINGNK…CEGVDDCLFP (159 aa)). Substrate contacts are provided by residues 49–51 (NGG), Gln-62, 91–92 (ND), Ser-122, and His-172. Gln-62 contributes to the Zn(2+) binding site. The Zn(2+) site is built by His-172 and His-180.

It belongs to the SIS family. GmhA subfamily. In terms of assembly, homotetramer. Requires Zn(2+) as cofactor.

It is found in the cytoplasm. It catalyses the reaction 2 D-sedoheptulose 7-phosphate = D-glycero-alpha-D-manno-heptose 7-phosphate + D-glycero-beta-D-manno-heptose 7-phosphate. Its pathway is carbohydrate biosynthesis; D-glycero-D-manno-heptose 7-phosphate biosynthesis; D-glycero-alpha-D-manno-heptose 7-phosphate and D-glycero-beta-D-manno-heptose 7-phosphate from sedoheptulose 7-phosphate: step 1/1. Catalyzes the isomerization of sedoheptulose 7-phosphate in D-glycero-D-manno-heptose 7-phosphate. The chain is Phosphoheptose isomerase from Pseudoalteromonas atlantica (strain T6c / ATCC BAA-1087).